The primary structure comprises 59 residues: Dimethylamine corrinoid protein (59 aa).

The 59-residue stretch at 1–59 (TLQGQKDVIELLKEEGLRDKIKVMVGGAPATQAWADKIGADCYAENASEAVAKAKELLA) folds into the B12-binding domain.

Belongs to the methylamine corrinoid protein family.

It participates in one-carbon metabolism; methanogenesis from dimethylamine. Acts as a methyl group carrier between MtbB and MtbA. The polypeptide is Dimethylamine corrinoid protein (mtbC) (Methanosarcina thermophila).